A 512-amino-acid polypeptide reads, in one-letter code: Histidine ammonia-lyase (512 aa).

Residues 142 to 144 (ASG) constitute a cross-link (5-imidazolinone (Ala-Gly)). A 2,3-didehydroalanine (Ser) modification is found at Ser143.

The protein belongs to the PAL/histidase family. Post-translationally, contains an active site 4-methylidene-imidazol-5-one (MIO), which is formed autocatalytically by cyclization and dehydration of residues Ala-Ser-Gly.

Its subcellular location is the cytoplasm. It carries out the reaction L-histidine = trans-urocanate + NH4(+). It participates in amino-acid degradation; L-histidine degradation into L-glutamate; N-formimidoyl-L-glutamate from L-histidine: step 1/3. This chain is Histidine ammonia-lyase, found in Bartonella quintana (strain Toulouse) (Rochalimaea quintana).